We begin with the raw amino-acid sequence, 512 residues long: Ribose import ATP-binding protein RbsA 2 (512 aa).

ABC transporter domains follow at residues 22 to 258 (LEMR…VGRD) and 263 to 512 (FPKV…TGNA). 54–61 (GENGAGKS) provides a ligand contact to ATP.

This sequence belongs to the ABC transporter superfamily. Ribose importer (TC 3.A.1.2.1) family. In terms of assembly, the complex is composed of an ATP-binding protein (RbsA), two transmembrane proteins (RbsC) and a solute-binding protein (RbsB).

Its subcellular location is the cell inner membrane. The enzyme catalyses D-ribose(out) + ATP + H2O = D-ribose(in) + ADP + phosphate + H(+). Part of the ABC transporter complex RbsABC involved in ribose import. Responsible for energy coupling to the transport system. This Rhizobium johnstonii (strain DSM 114642 / LMG 32736 / 3841) (Rhizobium leguminosarum bv. viciae) protein is Ribose import ATP-binding protein RbsA 2.